We begin with the raw amino-acid sequence, 342 residues long: MNSCHPPQDEMAGLIGIYAFQGFYGLLSVVVYTFNIRALRHHKNNLDKSFSLLYTCCAALSLTYFLDHFLIRRFVKLGFFCEIILENFGEPNYWMMPYKTIASYCPIAILVFHALIAAHRFSIVAAPMRGVQLWDRYRRLFVLVGFLIPLIFMWFMIPCKSYAELDSEGSGGLDIEYKKVFSISSSLAAAIAAVLFGVLTLCLTFGMLIALAKLSLRKLSQAEISLIVFEVFMTVFTLIYAFTQGILYYSIYIVKDMELKSTVIQFRTFAIDIFILPQAWTLLFLSTTVRRYTLRAFGKRLGVEFLSTEIEKSARMVSVAPATISLQKSTVLNYNFTLQNLF.

7 helical membrane-spanning segments follow: residues 11–31, 51–71, 106–126, 140–160, 191–211, 222–242, and 269–289; these read MAGL…SVVV, SLLY…HFLI, PIAI…IVAA, LFVL…IPCK, IAAV…LIAL, AEIS…IYAF, and FAID…STTV.

This sequence belongs to the nematode receptor-like protein srg family.

Its subcellular location is the membrane. The polypeptide is Serpentine receptor class gamma-69 (srg-69) (Caenorhabditis elegans).